We begin with the raw amino-acid sequence, 1671 residues long: Fatty acid synthase alpha subunit aflA (1671 aa).

Residues 40 to 60 (ITEEAPTEQPPLSTPPSLPQT) are disordered. Positions 47–58 (EQPPLSTPPSLP) are enriched in pro residues. Positions 75–153 (DVALSRVQIV…DANPTVQLGK (79 aa)) constitute a Carrier domain. Ser-113 is subject to O-(pantetheine 4'-phosphoryl)serine. The segment at 492 to 729 (GKTFLVTGAG…AMLLTPDFVA (238 aa)) is ketoreductase (KR) domain. The Ketosynthase family 3 (KS3) domain occupies 926–1428 (MEVLQEVAVE…QKGGQVVGVA (503 aa)). Cys-1113 serves as the catalytic For beta-ketoacyl synthase activity. The span at 1244-1270 (SMISVTSRPSSRSSTSSEVSDKSSLTS) shows a compositional bias: low complexity. The segment at 1244–1288 (SMISVTSRPSSRSSTSSEVSDKSSLTSITSISNPAPRAQRARSTT) is disordered. Catalysis depends on for beta-ketoacyl synthase activity residues His-1313 and His-1354. Residues 1497-1521 (PSTGQYRFRSDATPALDDDALPPPG) form a disordered region. Residue Asp-1552 coordinates Mg(2+). Acetyl-CoA contacts are provided by residues 1552–1554 (DLV), 1598–1608 (EAVFKCLQTHS), 1622–1625 (HGGN), and 1652–1654 (ISY). Residue Ser-1653 coordinates Mg(2+).

This sequence belongs to the thiolase-like superfamily. Fungal fatty acid synthetase subunit alpha family. [Alpha(6)beta(6)] hexamers of two multifunctional subunits (alpha and beta). Post-translationally, 4'-phosphopantetheine is transferred from CoA to a specific serine of the acyl carrier domain by the C-terminal PPT domain. This modification is essential for activity because fatty acids are bound in thioester linkage to the sulfhydryl of the prosthetic group.

The enzyme catalyses acetyl-CoA + n malonyl-CoA + 2n NADPH + 4n H(+) = a long-chain-acyl-CoA + n CoA + n CO2 + 2n NADP(+).. It catalyses the reaction a fatty acyl-[ACP] + malonyl-[ACP] + H(+) = a 3-oxoacyl-[ACP] + holo-[ACP] + CO2. It carries out the reaction a (3R)-hydroxyacyl-[ACP] + NADP(+) = a 3-oxoacyl-[ACP] + NADPH + H(+). It participates in mycotoxin biosynthesis; aflatoxin biosynthesis. Functionally, fatty acid synthase alpha subunit; part of the gene cluster that mediates the biosynthesis of aflatoxins, a group of polyketide-derived furanocoumarins, and part of the most toxic and carcinogenic compounds among the known mycotoxins. The four major aflatoxins produced by A.parasiticus are aflatoxin B1 (AFB1), aflatoxin B2 (AFB2), aflatoxin G1 (AFG1) and aflatoxin G2 (AFG2). Within the aflatoxin pathway, the fungal fatty acid synthase aflA/aflB provides the hexanoyl starter unit to the acyl-carrier protein (ACP) domain of the norsolorinic acid synthase to allow the first step of the pathway. The biosynthesis of aflatoxins begins with the norsolorinic acid synthase aflC that combines a hexanoyl starter unit produced by the fatty acid synthase aflA/aflB and 7 malonyl-CoA extender units to synthesize the precursor NOR. The second step is the conversion of NOR to averantin (AVN) and requires the norsolorinic acid ketoreductase aflD, which catalyzes the dehydration of norsolorinic acid to form (1'S)-averantin. The norsolorinic acid reductases aflE and aflF may also play a role in the conversion of NOR to AVN. The cytochrome P450 monooxygenase aflG then catalyzes the hydroxylation of AVN to 5'hydroxyaverantin (HAVN). The next step is performed by the 5'-hydroxyaverantin dehydrogenase aflH that transforms HAVN to 5'-oxoaverantin (OAVN) which is further converted to averufin (AVF) by aflK that plays a dual role in the pathway, as a 5'-oxoaverantin cyclase that mediates conversion of 5'-oxoaverantin, as well as a versicolorin B synthase in a later step in the pathway. The averufin oxidase aflI catalyzes the conversion of AVF to versiconal hemiacetal acetate (VHA). VHA is then the substrate for the versiconal hemiacetal acetate esterase aflJ to yield versiconal (VAL). Versicolorin B synthase aflK then converts VAL to versicolorin B (VERB) by closing the bisfuran ring of aflatoxin which is required for DNA-binding, thus giving to aflatoxin its activity as a mutagen. Then, the activity of the versicolorin B desaturase aflL leads to versicolorin A (VERA). A branch point starts from VERB since it can also be converted to dihydrodemethylsterigmatocystin (DMDHST), probably also by aflL, VERA being a precursor for aflatoxins B1 and G1, and DMDHST for aflatoxins B2 and G2. Next, the versicolorin reductase aflM and the cytochrome P450 monooxygenase aflN are involved in conversion of VERA to demethylsterigmatocystin (DMST). AflX and aflY seem also involved in this step, through probable aflX-mediated epoxide ring-opening step following versicolorin A oxidation and aflY-mediated Baeyer-Villiger oxidation required for the formation of the xanthone ring. The methyltransferase aflO then leads to the modification of DMST to sterigmatocystin (ST), and of DMDHST to dihydrosterigmatocystin (DHST). Both ST and DHST are then substrates of the O-methyltransferase aflP to yield O-methylsterigmatocystin (OMST) and dihydro-O-methylsterigmatocystin (DHOMST), respectively. Finally OMST is converted to aflatoxins B1 and G1, and DHOMST to aflatoxins B2 and G2, via the action of several enzymes including O-methylsterigmatocystin oxidoreductase aflQ, the cytochrome P450 monooxygenase aflU, but also the NADH-dependent flavin oxidoreductase nadA which is specifically required for the synthesis of AFG1. The polypeptide is Fatty acid synthase alpha subunit aflA (Aspergillus parasiticus (strain ATCC 56775 / NRRL 5862 / SRRC 143 / SU-1)).